Here is a 23-residue protein sequence, read N- to C-terminus: Nephrotoxin PsTX-115 (23 aa).

It is found in the secreted. Its subcellular location is the nematocyst. Nephrotoxin. When injected intravenously in rats, causes severe destructive glomerular changes. At 24 hours post-injection partial disruption of the glomerular basement membrane, massive thrombus formation in glomerular capillaries, severe mesangiolysis and infiltrating cells were observed in the majority of glomeruli. The sequence is that of Nephrotoxin PsTX-115 from Phyllodiscus semoni (Night anemone).